Reading from the N-terminus, the 128-residue chain is Sulfurtransferase TusD (128 aa).

Catalysis depends on cysteine 78, which acts as the Cysteine persulfide intermediate.

The protein belongs to the DsrE/TusD family. In terms of assembly, heterohexamer, formed by a dimer of trimers. The hexameric TusBCD complex contains 2 copies each of TusB, TusC and TusD. The TusBCD complex interacts with TusE.

It is found in the cytoplasm. Its function is as follows. Part of a sulfur-relay system required for 2-thiolation of 5-methylaminomethyl-2-thiouridine (mnm(5)s(2)U) at tRNA wobble positions. Accepts sulfur from TusA and transfers it in turn to TusE. This is Sulfurtransferase TusD from Escherichia coli (strain 55989 / EAEC).